Reading from the N-terminus, the 119-residue chain is Small ribosomal subunit protein uS13m (119 aa).

This sequence belongs to the universal ribosomal protein uS13 family. Part of the small ribosomal subunit.

Its subcellular location is the mitochondrion. In terms of biological role, located at the top of the head of the small subunit, it contacts several helices of the small subunit rRNA. This is Small ribosomal subunit protein uS13m (RPS13) from Prototheca wickerhamii.